Consider the following 551-residue polypeptide: MTKLVTWHIKNAKILDVFNLKFDDTELWINDNQILYRGKRSDLTAENTFDAGGGYIVPGLIDSHLHIESSLLTPSEFGKLVIPHGITRIFADPHEIASVAGVSGIQYMLEDAKQTPLNIHYMLPSSVPATPFEHAGATLHADALKPFYSVPEVNGLAEVMDFPAVANLDPDMLQKIKDAEDAGRHVDGHAAGLTPEQLAVYRNVGIDTDHESENAKEALERLNAGFSIFVREGTVERDEKAILPAITMANQSHFSFATDDKTANDIQSEGSIDYSVKLAIENGMDPAIAFTIATYNAAQAHKLQNIGALTDGFVADLAVFDDLAHLETPKVMIGGHWYKDNQSIVTPLANQSLNFSLTKSDIALPLQSDKPAHIINITPHHITTEHTVEEVPVEQGLFVANETFAKIVVAERYHNLGHGVGIIKGFNMRDGAIASTIAHDSHNVIIAGVNDDDMILAADTLHEIGGGQVVVNHGKITTLPLPIGGLMSDQPFENVIKTNQQLLQAFSEISDVPFDPFLTLSFMALPVIPSLKITDQGLFDFEKFDFITVQD.

The protein belongs to the metallo-dependent hydrolases superfamily. Adenine deaminase family. It depends on Mn(2+) as a cofactor.

It carries out the reaction adenine + H2O + H(+) = hypoxanthine + NH4(+). This chain is Adenine deaminase, found in Leuconostoc mesenteroides subsp. mesenteroides (strain ATCC 8293 / DSM 20343 / BCRC 11652 / CCM 1803 / JCM 6124 / NCDO 523 / NBRC 100496 / NCIMB 8023 / NCTC 12954 / NRRL B-1118 / 37Y).